We begin with the raw amino-acid sequence, 193 residues long: CASP-like protein 1D2 (193 aa).

Residues Met-1–Asp-30 lie on the Cytoplasmic side of the membrane. Residues Val-31–Ala-51 form a helical membrane-spanning segment. Asn-52 carries N-linked (GlcNAc...) asparagine glycosylation. Over Asn-52–Pro-73 the chain is Extracellular. A helical membrane pass occupies residues Ala-74–Leu-94. Residues Ala-95–Lys-108 are Cytoplasmic-facing. The chain crosses the membrane as a helical span at residues Leu-109–Gly-129. Over Thr-130–His-161 the chain is Extracellular. The chain crosses the membrane as a helical span at residues Val-162–Leu-182. Residues Ser-183–Lys-193 lie on the Cytoplasmic side of the membrane.

It belongs to the Casparian strip membrane proteins (CASP) family. Homodimer and heterodimers.

The protein resides in the cell membrane. The chain is CASP-like protein 1D2 from Glycine max (Soybean).